A 131-amino-acid chain; its full sequence is Small ribosomal subunit protein uS8 (131 aa).

This sequence belongs to the universal ribosomal protein uS8 family. Part of the 30S ribosomal subunit. Contacts proteins S5 and S12.

Its function is as follows. One of the primary rRNA binding proteins, it binds directly to 16S rRNA central domain where it helps coordinate assembly of the platform of the 30S subunit. The polypeptide is Small ribosomal subunit protein uS8 (Erythrobacter litoralis (strain HTCC2594)).